Consider the following 171-residue polypeptide: UPF0398 protein MGAS9429_Spy1349 (171 aa).

The protein belongs to the UPF0398 family.

This Streptococcus pyogenes serotype M12 (strain MGAS9429) protein is UPF0398 protein MGAS9429_Spy1349.